We begin with the raw amino-acid sequence, 59 residues long: Potassium channel toxin alpha-KTx 15.2 (59 aa).

The signal sequence occupies residues 1–22 (MKFSSIILLTLLICSMSKFGNC). Gln-23 is subject to Pyrrolidone carboxylic acid. Cystine bridges form between Cys-30/Cys-50, Cys-35/Cys-55, and Cys-39/Cys-57.

It belongs to the short scorpion toxin superfamily. Potassium channel inhibitor family. Alpha-KTx 15 subfamily. In terms of tissue distribution, expressed by the venom gland.

It is found in the secreted. In terms of biological role, blocks both human ERG1/Kv11.1/KCNH2 potassium channels (in a reversible manner) and A-type voltage-gated potassium channels Kv4/KCND (in an irreversible manner). The presence of the Kv4-associated proteins DPP6 or DPP10 is mandatory to have high-affinity blockade of Kv4.2/KCND2 and Kv4.3/KCND3 channels. In contrast, the presence of the Kv4-associated protein KChIP1/KCNIP1 does not enhance the affinity blockade. May dispose of two functional faces (A and B); the two basic residues (Arg-40 and Lys-41) on the alpha-helix side of the peptide that blocks the hERG current (face A) and the typical dyad through which it blocks A-type currents on the beta-sheet side (face B). In adult rat brain, it binds to sites in the striatum, hippocampus, superior colliculus, and cerebellum. It shares the same target in rat brain than AaTX1 (AC Q867F4) and AmmTX3 (AC P60208). In DPP6 knockout mice, A-type currents are much less affected by the toxin than in wild-type mice. The chain is Potassium channel toxin alpha-KTx 15.2 from Olivierus martensii (Manchurian scorpion).